Consider the following 443-residue polypeptide: Multidrug resistance protein MdtA (443 aa).

The first 24 residues, 1–24 (MKAQSKRTSRLLILLGIAVAIIVA), serve as a signal peptide directing secretion. A compositionally biased stretch (polar residues) spans 36-46 (DGSTGAQQHAV). Disordered stretches follow at residues 36–57 (DGST…GGRR) and 398–443 (TPRS…AEKS). Over residues 409-419 (AAEKPATAEKA) the composition is skewed to basic and acidic residues. Positions 427 to 443 (SATGASAGSTTTAAEKS) are enriched in low complexity.

Belongs to the membrane fusion protein (MFP) (TC 8.A.1) family. Part of a tripartite efflux system composed of MdtA, MdtB and MdtC.

The protein localises to the cell inner membrane. The polypeptide is Multidrug resistance protein MdtA (Yersinia enterocolitica serotype O:8 / biotype 1B (strain NCTC 13174 / 8081)).